The chain runs to 863 residues: Glycogen phosphorylase (863 aa).

Residue lysine 618 is modified to N6-(pyridoxal phosphate)lysine.

Belongs to the glycogen phosphorylase family. It depends on pyridoxal 5'-phosphate as a cofactor.

The catalysed reaction is [(1-&gt;4)-alpha-D-glucosyl](n) + phosphate = [(1-&gt;4)-alpha-D-glucosyl](n-1) + alpha-D-glucose 1-phosphate. Phosphorylase is an important allosteric enzyme in carbohydrate metabolism. Enzymes from different sources differ in their regulatory mechanisms and in their natural substrates. However, all known phosphorylases share catalytic and structural properties. This chain is Glycogen phosphorylase (glgP), found in Mycobacterium tuberculosis (strain CDC 1551 / Oshkosh).